Consider the following 311-residue polypeptide: Dermonecrotic toxin (311 aa).

Residues Met-1 to Thr-21 form the signal peptide. Positions Asp-22–Arg-26 are excised as a propeptide. Residue His-38 is part of the active site. Residues Glu-58 and Asp-60 each contribute to the Mg(2+) site. His-73 (nucleophile) is an active-site residue. A disulfide bridge links Cys-77 with Cys-83. Asp-117 is a binding site for Mg(2+).

This sequence belongs to the arthropod phospholipase D family. Class I subfamily. Requires Mg(2+) as cofactor. In terms of tissue distribution, expressed by the venom gland.

The protein localises to the secreted. It carries out the reaction an N-(acyl)-sphingosylphosphocholine = an N-(acyl)-sphingosyl-1,3-cyclic phosphate + choline. It catalyses the reaction an N-(acyl)-sphingosylphosphoethanolamine = an N-(acyl)-sphingosyl-1,3-cyclic phosphate + ethanolamine. The catalysed reaction is a 1-acyl-sn-glycero-3-phosphocholine = a 1-acyl-sn-glycero-2,3-cyclic phosphate + choline. The enzyme catalyses a 1-acyl-sn-glycero-3-phosphoethanolamine = a 1-acyl-sn-glycero-2,3-cyclic phosphate + ethanolamine. Catalytic activity and hemolysis are inhibited by divalent ion chelators (1,10-phenanthroline, EDTA, and EGTA). Dermonecrotic toxins cleave the phosphodiester linkage between the phosphate and headgroup of certain phospholipids (sphingolipid and lysolipid substrates), forming an alcohol (often choline) and a cyclic phosphate. This toxin acts on sphingomyelin (SM). It may also act on ceramide phosphoethanolamine (CPE), lysophosphatidylcholine (LPC) and lysophosphatidylethanolamine (LPE), but not on lysophosphatidylserine (LPS), and lysophosphatidylglycerol (LPG). It acts by transphosphatidylation, releasing exclusively cyclic phosphate products as second products. Shows complement-dependent hemolysis. Also induces dermonecrosis, vascular permeability, edema, inflammatory response, and platelet aggregation. The chain is Dermonecrotic toxin from Loxosceles laeta (South American recluse spider).